The primary structure comprises 661 residues: DNA-directed RNA polymerase subunit beta' (661 aa).

Zn(2+) is bound by residues cysteine 69, cysteine 71, cysteine 87, and cysteine 90. Aspartate 489, aspartate 491, and aspartate 493 together coordinate Mg(2+).

Belongs to the RNA polymerase beta' chain family. RpoC1 subfamily. In plastids the minimal PEP RNA polymerase catalytic core is composed of four subunits: alpha, beta, beta', and beta''. When a (nuclear-encoded) sigma factor is associated with the core the holoenzyme is formed, which can initiate transcription. It depends on Mg(2+) as a cofactor. Zn(2+) is required as a cofactor.

Its subcellular location is the plastid. It localises to the chloroplast. It carries out the reaction RNA(n) + a ribonucleoside 5'-triphosphate = RNA(n+1) + diphosphate. DNA-dependent RNA polymerase catalyzes the transcription of DNA into RNA using the four ribonucleoside triphosphates as substrates. This is DNA-directed RNA polymerase subunit beta' from Chaetosphaeridium globosum (Charophycean green alga).